A 124-amino-acid chain; its full sequence is Small ribosomal subunit protein uS12cz/uS12cy (124 aa).

It belongs to the universal ribosomal protein uS12 family. In terms of assembly, part of the 30S ribosomal subunit.

It localises to the plastid. In terms of biological role, with S4 and S5 plays an important role in translational accuracy. Located at the interface of the 30S and 50S subunits. This is Small ribosomal subunit protein uS12cz/uS12cy (rps12-A) from Epifagus virginiana (Beechdrops).